The sequence spans 1301 residues: Zinc finger protein 532 (1301 aa).

Disordered stretches follow at residues 26 to 206 (PKAA…RETE), 223 to 266 (AEDK…SSSK), and 281 to 366 (KAAS…IKTI). Residues 32 to 52 (SGHDDHESHMKQNAHGEDDSH) are compositionally biased toward basic and acidic residues. A compositionally biased stretch (polar residues) spans 84–101 (PTGNGLHNGFLTASSLDS). The span at 102–111 (YSKDGAKSLK) shows a compositional bias: basic and acidic residues. Residues 122-133 (KDSTFSQFSPIS) show a composition bias toward polar residues. Residues serine 130, serine 133, and serine 134 each carry the phosphoserine modification. Acidic residues predominate over residues 136–151 (EEFDDDEKIEVDDPPD). Over residues 158–170 (SFRSNVLTGSAPQ) the composition is skewed to polar residues. Lysine 175 is subject to N6-acetyllysine. The span at 182 to 195 (ENSSKTGLSTSGNV) shows a compositional bias: polar residues. 2 stretches are compositionally biased toward basic and acidic residues: residues 196–206 (EKNKAVKRETE) and 223–250 (AEDK…EKND). The residue at position 205 (threonine 205) is a Phosphothreonine. Phosphoserine is present on residues serine 252, serine 307, and serine 314. Basic and acidic residues predominate over residues 303–315 (EVNDSPRAADKSP). Positions 337–359 (SISSENSSKGSPSSPAGSTPAIP) are enriched in low complexity. At serine 434 the chain carries Phosphoserine. Residues lysine 459 and lysine 516 each participate in a glycyl lysine isopeptide (Lys-Gly) (interchain with G-Cter in SUMO2) cross-link. The C2H2-type 1; degenerate zinc-finger motif lies at 616–635 (YKCLECGDSFALEKSLTQHY). A C2H2-type 2; degenerate zinc finger spans residues 754–779 (LKCLECNEVFQDETSLATHFQQAADT). C2H2-type zinc fingers lie at residues 783-805 (KTCT…QRIH), 842-865 (FRCV…QGSH), 870-893 (YKCP…YTQH), 905-927 (YKCS…FDQH), and 936-959 (FKCP…KSMH). Lysine 980 participates in a covalent cross-link: Glycyl lysine isopeptide (Lys-Gly) (interchain with G-Cter in SUMO2). Residues 983–1017 (TQNSANQNKEDTKSMNGKEKLEKKSPSPVKKSMET) are disordered. A compositionally biased stretch (basic and acidic residues) spans 990–1017 (NKEDTKSMNGKEKLEKKSPSPVKKSMET). 2 consecutive C2H2-type zinc fingers follow at residues 1025-1048 (WTCW…RKEH) and 1055-1078 (HPCR…RIKH). The segment at 1085–1111 (YACSHCPDSRRTFTKRLMLEKHVQLMH) adopts a C2H2-type 10; degenerate zinc-finger fold. A Phosphoserine modification is found at serine 1140. Residues lysine 1144 and lysine 1167 each participate in a glycyl lysine isopeptide (Lys-Gly) (interchain with G-Cter in SUMO2) cross-link. Residues 1203–1226 (YQCRECGLCYTSHVSLSRHLFIVH) form a C2H2-type 11 zinc finger. The interval 1230–1263 (EPQPVSKQNGAGEDNQQENKPSHEDESPDGAVSD) is disordered. Residues 1264–1286 (RKCKVCAKTFETEAALNTHMRTH) form a C2H2-type 12 zinc finger.

The protein belongs to the krueppel C2H2-type zinc-finger protein family.

The protein resides in the nucleus. May be involved in transcriptional regulation. The polypeptide is Zinc finger protein 532 (ZNF532) (Homo sapiens (Human)).